Here is a 387-residue protein sequence, read N- to C-terminus: 2-deoxystreptamine glucosyltransferase (387 aa).

It belongs to the glycosyltransferase group 1 family.

The catalysed reaction is 2-deoxystreptamine + UDP-N-acetyl-alpha-D-glucosamine = 2'-N-acetylparomamine + UDP + H(+). It catalyses the reaction 2-deoxystreptamine + UDP-alpha-D-glucose = 2'-deamino-2'-hydroxyparomamine + UDP + H(+). It functions in the pathway antibiotic biosynthesis; kanamycin biosynthesis. In terms of biological role, glycosyltransferase involved in the biosynthesis of kanamycin by mediating conversion of 2-deoxystreptamine (2-DOS) to 2'-N-acetylparomamine using UDP-alpha-D-glucose as sugar donor. Can also accept UDP-alpha-D-glucosamine, but with a much lower activity compared to UDP-alpha-D-glucose. This Streptomyces kanamyceticus protein is 2-deoxystreptamine glucosyltransferase (kanF).